A 131-amino-acid chain; its full sequence is Large ribosomal subunit protein bL12 (131 aa).

It belongs to the bacterial ribosomal protein bL12 family. As to quaternary structure, homodimer. Part of the ribosomal stalk of the 50S ribosomal subunit. Forms a multimeric L10(L12)X complex, where L10 forms an elongated spine to which 2 to 4 L12 dimers bind in a sequential fashion. Binds GTP-bound translation factors.

Forms part of the ribosomal stalk which helps the ribosome interact with GTP-bound translation factors. Is thus essential for accurate translation. The protein is Large ribosomal subunit protein bL12 of Prochlorococcus marinus (strain MIT 9312).